The following is a 448-amino-acid chain: MRYLPHSEADRAAMLATIGAASVEDLFRDVPREALDQAAFDALPDHGGEMEVERALSALAARNLTAGSVPCFLGAGSYRHHVPAAVDALIQRGEFLTSYTPYQAEVSQGTLQYLFEFQTQVALITGMEVANASMYDGATACAEAAAMAVRITRRRKVLMAGGLHPHYTATTQTLLACLGHEGEGLPPDPLALGDLIGRVGSDTACVIVQNPDFFGRLRDLSPLAEACHAAGALLVVAVCEPVSLGLVAPPGAMGADIVVAEGHALGSPTGFGGPGVGLFATREKYLRQMPGRLAGETLDESGKRGYVLTLSTREQHIRREKATSNICTNSGLIALAFTIHMTLLGEAGFTRLAWINHANAVALAEKLARVKGVKVLPETFFNEFTLRLPKPAAEVVEALAARSILAGVPVSRFLPTYPELANLLLVNATELTTPEDADALVAALKEVL.

Belongs to the GcvP family. N-terminal subunit subfamily. As to quaternary structure, the glycine cleavage system is composed of four proteins: P, T, L and H. In this organism, the P 'protein' is a heterodimer of two subunits.

The catalysed reaction is N(6)-[(R)-lipoyl]-L-lysyl-[glycine-cleavage complex H protein] + glycine + H(+) = N(6)-[(R)-S(8)-aminomethyldihydrolipoyl]-L-lysyl-[glycine-cleavage complex H protein] + CO2. Its function is as follows. The glycine cleavage system catalyzes the degradation of glycine. The P protein binds the alpha-amino group of glycine through its pyridoxal phosphate cofactor; CO(2) is released and the remaining methylamine moiety is then transferred to the lipoamide cofactor of the H protein. The sequence is that of Probable glycine dehydrogenase (decarboxylating) subunit 1 from Rhodospirillum rubrum (strain ATCC 11170 / ATH 1.1.1 / DSM 467 / LMG 4362 / NCIMB 8255 / S1).